Consider the following 854-residue polypeptide: Putative COX1/OXI3 intron 2 protein (854 aa).

The Reverse transcriptase domain occupies 329–613 (LSKDINTNMF…EGVSFLGYDV (285 aa)).

The protein localises to the mitochondrion. This is Putative COX1/OXI3 intron 2 protein (AI2) from Saccharomyces cerevisiae (strain ATCC 204508 / S288c) (Baker's yeast).